Consider the following 338-residue polypeptide: Ketol-acid reductoisomerase (NADP(+)) (338 aa).

The KARI N-terminal Rossmann domain occupies 1-181 (MKVYYDKDAD…GGGRTGIIET (181 aa)). NADP(+) is bound by residues 24–27 (YGSQ), arginine 47, serine 50, serine 52, and 82–85 (DEFQ). Residue histidine 107 is part of the active site. Glycine 133 provides a ligand contact to NADP(+). Residues 182 to 327 (TFKDETETDL…AKLRSMMPWI (146 aa)) enclose the KARI C-terminal knotted domain. 4 residues coordinate Mg(2+): aspartate 190, glutamate 194, glutamate 226, and glutamate 230. Serine 251 contacts substrate.

This sequence belongs to the ketol-acid reductoisomerase family. Mg(2+) is required as a cofactor.

The catalysed reaction is (2R)-2,3-dihydroxy-3-methylbutanoate + NADP(+) = (2S)-2-acetolactate + NADPH + H(+). The enzyme catalyses (2R,3R)-2,3-dihydroxy-3-methylpentanoate + NADP(+) = (S)-2-ethyl-2-hydroxy-3-oxobutanoate + NADPH + H(+). The protein operates within amino-acid biosynthesis; L-isoleucine biosynthesis; L-isoleucine from 2-oxobutanoate: step 2/4. It participates in amino-acid biosynthesis; L-valine biosynthesis; L-valine from pyruvate: step 2/4. Functionally, involved in the biosynthesis of branched-chain amino acids (BCAA). Catalyzes an alkyl-migration followed by a ketol-acid reduction of (S)-2-acetolactate (S2AL) to yield (R)-2,3-dihydroxy-isovalerate. In the isomerase reaction, S2AL is rearranged via a Mg-dependent methyl migration to produce 3-hydroxy-3-methyl-2-ketobutyrate (HMKB). In the reductase reaction, this 2-ketoacid undergoes a metal-dependent reduction by NADPH to yield (R)-2,3-dihydroxy-isovalerate. The chain is Ketol-acid reductoisomerase (NADP(+)) from Thiobacillus denitrificans (strain ATCC 25259 / T1).